The primary structure comprises 191 residues: Fe/S biogenesis protein NfuA (191 aa).

Cysteine 149 and cysteine 152 together coordinate [4Fe-4S] cluster.

The protein belongs to the NfuA family. As to quaternary structure, homodimer. [4Fe-4S] cluster serves as cofactor.

Its function is as follows. Involved in iron-sulfur cluster biogenesis. Binds a 4Fe-4S cluster, can transfer this cluster to apoproteins, and thereby intervenes in the maturation of Fe/S proteins. Could also act as a scaffold/chaperone for damaged Fe/S proteins. In Pseudoalteromonas translucida (strain TAC 125), this protein is Fe/S biogenesis protein NfuA.